The sequence spans 133 residues: Vesicle transport protein GOT1A (133 aa).

The Cytoplasmic portion of the chain corresponds to 1–9 (MISITEWQK). Residues 10–30 (IGVGITGFGVFFILFGILLYF) form a helical membrane-spanning segment. A topological domain (lumenal) is located at residue aspartate 31. Residues 32-52 (SVLLAFGNLLFLTGLSLIIGL) form a helical membrane-spanning segment. At 53–68 (RRTFAFFFQRHKLKGT) the chain is on the cytoplasmic side. The chain crosses the membrane as a helical span at residues 69–89 (SFFLGGVAIVLLRWPLLGMLL). Topologically, residues 90-92 (EAY) are lumenal. Residues 93 to 113 (GFISLFKGFFPVVFGFLGSAF) traverse the membrane as a helical segment. Residues 114–133 (NIPFLSTLFQKLQGSSSSMV) are Cytoplasmic-facing.

It belongs to the GOT1 family.

It localises to the golgi apparatus membrane. In terms of biological role, may be involved in fusion of ER-derived transport vesicles with the Golgi complex. The sequence is that of Vesicle transport protein GOT1A from Mus musculus (Mouse).